The chain runs to 105 residues: DNA-directed RNA polymerases I and III subunit RPAC2 (105 aa).

This sequence belongs to the archaeal Rpo11/eukaryotic RPB11/RPC19 RNA polymerase subunit family. As to quaternary structure, component of the RNA polymerase I (Pol I) and RNA polymerase III (Pol III) complexes consisting of at least 13 and 17 subunits, respectively.

It localises to the nucleus. In terms of biological role, DNA-dependent RNA polymerase catalyzes the transcription of DNA into RNA using the four ribonucleoside triphosphates as substrates. Common core component of RNA polymerases I and III which synthesize ribosomal RNA precursors and small RNAs, such as 5S rRNA and tRNAs, respectively. This is DNA-directed RNA polymerases I and III subunit RPAC2 from Drosophila melanogaster (Fruit fly).